The following is a 140-amino-acid chain: Small ribosomal subunit protein bS6 (140 aa).

The interval 111 to 140 (EHFTGPAGAEGSDDESTESTDEAVAETADA) is disordered. The segment covering 121-140 (GSDDESTESTDEAVAETADA) has biased composition (acidic residues).

Belongs to the bacterial ribosomal protein bS6 family.

Binds together with bS18 to 16S ribosomal RNA. The sequence is that of Small ribosomal subunit protein bS6 from Rhodopirellula baltica (strain DSM 10527 / NCIMB 13988 / SH1).